Consider the following 418-residue polypeptide: D-amino acid dehydrogenase (418 aa).

FAD is bound at residue 3–17; that stretch reads VLVLGAGVAGVSSAW.

This sequence belongs to the DadA oxidoreductase family. The cofactor is FAD.

It catalyses the reaction a D-alpha-amino acid + A + H2O = a 2-oxocarboxylate + AH2 + NH4(+). It participates in amino-acid degradation; D-alanine degradation; NH(3) and pyruvate from D-alanine: step 1/1. In terms of biological role, oxidative deamination of D-amino acids. This Neisseria meningitidis serogroup C (strain 053442) protein is D-amino acid dehydrogenase.